Consider the following 455-residue polypeptide: Ribulose bisphosphate carboxylase large chain (455 aa).

At lysine 5 the chain carries N6,N6,N6-trimethyllysine. Positions 114 and 164 each coordinate substrate. Lysine 166 acts as the Proton acceptor in catalysis. Lysine 168 serves as a coordination point for substrate. Residues lysine 192, aspartate 194, and glutamate 195 each coordinate Mg(2+). Lysine 192 bears the N6-carboxylysine mark. Catalysis depends on histidine 285, which acts as the Proton acceptor. The substrate site is built by arginine 286, histidine 318, and serine 370.

This sequence belongs to the RuBisCO large chain family. Type I subfamily. In terms of assembly, heterohexadecamer of 8 large chains and 8 small chains; disulfide-linked. The disulfide link is formed within the large subunit homodimers. It depends on Mg(2+) as a cofactor. In terms of processing, the disulfide bond which can form in the large chain dimeric partners within the hexadecamer appears to be associated with oxidative stress and protein turnover.

The protein localises to the plastid. Its subcellular location is the chloroplast. The catalysed reaction is 2 (2R)-3-phosphoglycerate + 2 H(+) = D-ribulose 1,5-bisphosphate + CO2 + H2O. The enzyme catalyses D-ribulose 1,5-bisphosphate + O2 = 2-phosphoglycolate + (2R)-3-phosphoglycerate + 2 H(+). In terms of biological role, ruBisCO catalyzes two reactions: the carboxylation of D-ribulose 1,5-bisphosphate, the primary event in carbon dioxide fixation, as well as the oxidative fragmentation of the pentose substrate in the photorespiration process. Both reactions occur simultaneously and in competition at the same active site. This Brownea coccinea (Rose of Venezuela) protein is Ribulose bisphosphate carboxylase large chain.